The chain runs to 128 residues: SH2 domain-containing protein 1A (128 aa).

The region spanning 6–102 (VYHGKISRET…GIVIPLQYPV (97 aa)) is the SH2 domain. Positions 67-92 (DTAPGVHKRFFRKIKNLISAFQKPDQ) are interaction with FYN SH3 domain. Lys-89 carries the N6-acetyllysine modification. The tract at residues 103 to 128 (EKKSSARSTQGATGRREDPDVFLKTP) is disordered. Over residues 116-128 (GRREDPDVFLKTP) the composition is skewed to basic and acidic residues.

As to quaternary structure, interacts with CD84, CD244, LY9, SLAMF1 and FYN. Interacts with NTRK1, NTRK2 and NTRK3.

The protein resides in the cytoplasm. Functionally, cytoplasmic adapter regulating receptors of the signaling lymphocytic activation molecule (SLAM) family such as SLAMF1, CD244, LY9, CD84, SLAMF6 and SLAMF7. In SLAM signaling seems to cooperate with SH2D1B/EAT-2. Initially it has been proposed that association with SLAMF1 prevents SLAMF1 binding to inhibitory effectors including INPP5D/SHIP1 and PTPN11/SHP-2. However, by simultaneous interactions, recruits FYN which subsequently phosphorylates and activates SLAMF1. Positively regulates CD244/2B4- and CD84-mediated natural killer (NK) cell functions. Can also promote CD48-, SLAMF6 -, LY9-, and SLAMF7-mediated NK cell activation. In the context of NK cell-mediated cytotoxicity enhances conjugate formation with target cells. May also regulate the activity of the neurotrophin receptors NTRK1, NTRK2 and NTRK3. The chain is SH2 domain-containing protein 1A (SH2D1A) from Sus scrofa (Pig).